A 435-amino-acid chain; its full sequence is MAETETTADRNVEIWKIKKLIKSLEAARGNGTSMISLIIPPKDQVSRVAKMLADEFGTASNIKSRVNRLSVLGAITSVQQRLKLYNKVPPNGLVVYCGTIVTDEGKEKKVNIDFEPFKPINTSLYLCDNKFHTEALTALLSDDNKFGFIVMDGNGALFGTLQGNTREVLHKFTVDLPKKHGRGGQSALRFARLRMEKRHNYVRKVAETAVQLFITNDRPNVTGLVLAGSADFKTELSQSDMFDQRLQVKILKLVDVSYGGENGFNQAIELSAEVLSNVKFIQEKKLIGRYFDEISQDTGKYCFGVDDTLKALEMGAVEILIVWENLDTMRYVLKNHTTDEEKILFLKPDQEKDKTHFTDKDTGVEMEMVESCSLLEWFANNYKKFGSTLEIVTDRSQEGSQFVKGFGGIGGMLRYRIDFQGMEFNDDDPDLYDDY.

The protein belongs to the eukaryotic release factor 1 family. As to quaternary structure, heterodimer of two subunits, one of which binds GTP.

The protein localises to the cytoplasm. Directs the termination of nascent peptide synthesis (translation) in response to the termination codons UAA, UAG and UGA. The polypeptide is Eukaryotic peptide chain release factor subunit 1 (ERF1) (Polyandrocarpa misakiensis (Tunicate)).